Here is a 155-residue protein sequence, read N- to C-terminus: Deoxyuridine 5'-triphosphate nucleotidohydrolase (155 aa).

Substrate-binding positions include 74-76 (RSG), Asn87, and 91-93 (TID).

Belongs to the dUTPase family. Requires Mg(2+) as cofactor.

The enzyme catalyses dUTP + H2O = dUMP + diphosphate + H(+). It functions in the pathway pyrimidine metabolism; dUMP biosynthesis; dUMP from dCTP (dUTP route): step 2/2. This enzyme is involved in nucleotide metabolism: it produces dUMP, the immediate precursor of thymidine nucleotides and it decreases the intracellular concentration of dUTP so that uracil cannot be incorporated into DNA. The polypeptide is Deoxyuridine 5'-triphosphate nucleotidohydrolase (Dinoroseobacter shibae (strain DSM 16493 / NCIMB 14021 / DFL 12)).